Consider the following 495-residue polypeptide: Methyl viologen resistance protein SmvA (495 aa).

The next 14 helical transmembrane spans lie at 5-25 (WLTL…ATVL), 44-64 (LWII…MGAL), 73-93 (LLML…FSHT), 96-116 (WLIA…PATL), 135-155 (VWAA…GILL), 158-178 (FYWG…MGLT), 192-212 (PLNL…VYSA), 220-240 (LSLW…GLFI), 260-280 (IILS…GFEL), 299-319 (VFML…GVLV), 327-347 (VATG…MTDF), 357-377 (LMAL…SAIM), 391-411 (IETM…GLLL), and 469-489 (VALS…WFSL).

The protein belongs to the major facilitator superfamily. TCR/Tet family.

The protein resides in the cell inner membrane. In terms of biological role, major efflux pump for acriflavine and other quaternary ammonium compounds (QACs). Also required for resistance to methyl viologen. The protein is Methyl viologen resistance protein SmvA (smvA) of Salmonella typhimurium (strain LT2 / SGSC1412 / ATCC 700720).